The sequence spans 374 residues: 12-oxophytodienoate reductase 2 (374 aa).

The residue at position 1 (M1) is an N-acetylmethionine. Residues P33–T35, A66, and Q108 contribute to the FMN site. Position 185 (H185) interacts with substrate. The active-site Proton donor is Y190. R237 contacts FMN. Residue R277 coordinates substrate. FMN contacts are provided by residues A305 to G307 and G328 to R329.

Belongs to the NADH:flavin oxidoreductase/NADH oxidase family. Requires FMN as cofactor. In terms of tissue distribution, expressed at highest levels in roots and cotyledons, and at lower levels in leaves, shoots and flowers (sepals, petals, maturing siliques and developing pollen).

The protein resides in the cytoplasm. It carries out the reaction (1S,2S)-OPC-8 + NADP(+) = (9S,13S,15Z)-12-oxophyto-10,15-dienoate + NADPH + H(+). The enzyme catalyses a 4,5-didehydrojasmonate + NADPH + H(+) = a jasmonate + NADP(+). It participates in lipid metabolism; oxylipin biosynthesis. In terms of biological role, specifically cleaves olefinic bonds in alpha,beta-unsaturated carbonyls and may be involved in detoxification or modification of these reactive compounds. May be involved in the biosynthesis or metabolism of oxylipin signaling molecules. In vitro, reduces 9R,13R-12-oxophytodienoic acid (9R,13R-OPDA) to 9R,13R-OPC-8:0, but only poorly 9S,13S-OPDA, the natural precursor of jasmonic acid (JA). Can detoxify the explosive 2,4,6-trinitrotoluene (TNT) in vitro and in vivo by catalyzing its nitroreduction to form hydroxylamino-dinitrotoluene (HADNT). Functions in an alternative and OPR3-independent pathway for JA biosynthesis. Catalyzes the NADPH-dependent reduction of 4,5-didehydrojasmonates to jasmonates. This Arabidopsis thaliana (Mouse-ear cress) protein is 12-oxophytodienoate reductase 2.